We begin with the raw amino-acid sequence, 497 residues long: Phenylalanine--tRNA ligase alpha subunit (497 aa).

Residues Thr-329, 372 to 374, and Tyr-412 contribute to the L-phenylalanine site; that span reads QIE. Glu-414 is a Mg(2+) binding site. Phe-438 contributes to the L-phenylalanine binding site.

It belongs to the class-II aminoacyl-tRNA synthetase family. Phe-tRNA synthetase alpha subunit type 2 subfamily. Heterotetramer; dimer of two heterodimers formed by alpha and beta subunits. Mg(2+) is required as a cofactor.

It localises to the cytoplasm. The catalysed reaction is tRNA(Phe) + L-phenylalanine + ATP = L-phenylalanyl-tRNA(Phe) + AMP + diphosphate + H(+). The polypeptide is Phenylalanine--tRNA ligase alpha subunit (farsa) (Danio rerio (Zebrafish)).